A 406-amino-acid chain; its full sequence is Corticosteroid-binding globulin (406 aa).

A signal peptide spans 1–22 (MPLLLYTCLLWLLSSGLWTVQA). N-linked (GlcNAc...) asparagine glycans are attached at residues Asn-31 and Asn-96. Gln-255 contacts cortisol. Asn-261 carries N-linked (GlcNAc...) asparagine glycosylation. Residue Asp-287 coordinates cortisol. N-linked (GlcNAc...) asparagine glycosylation is found at Asn-331 and Asn-360. Cortisol is bound at residue Trp-394.

This sequence belongs to the serpin family. As to expression, expressed by the liver; secreted in plasma.

It is found in the secreted. Its function is as follows. Major transport protein for glucocorticoids and progestins in the blood of almost all vertebrate species. The polypeptide is Corticosteroid-binding globulin (SERPINA6) (Saimiri sciureus (Common squirrel monkey)).